The sequence spans 111 residues: Large ribosomal subunit protein uL22 (111 aa).

This sequence belongs to the universal ribosomal protein uL22 family. Part of the 50S ribosomal subunit.

Functionally, this protein binds specifically to 23S rRNA; its binding is stimulated by other ribosomal proteins, e.g. L4, L17, and L20. It is important during the early stages of 50S assembly. It makes multiple contacts with different domains of the 23S rRNA in the assembled 50S subunit and ribosome. The globular domain of the protein is located near the polypeptide exit tunnel on the outside of the subunit, while an extended beta-hairpin is found that lines the wall of the exit tunnel in the center of the 70S ribosome. This chain is Large ribosomal subunit protein uL22, found in Clostridium beijerinckii (strain ATCC 51743 / NCIMB 8052) (Clostridium acetobutylicum).